The sequence spans 130 residues: ER membrane protein complex subunit 5 (130 aa).

Residues methionine 1 to serine 3 lie on the Cytoplasmic side of the membrane. The helical transmembrane segment at serine 4–phenylalanine 22 threads the bilayer. Over serine 23–isoleucine 43 the chain is Lumenal. The helical transmembrane segment at aspartate 44–isoleucine 63 threads the bilayer. The Cytoplasmic portion of the chain corresponds to serine 64 to histidine 130.

Belongs to the membrane magnesium transporter (TC 1.A.67) family. In terms of assembly, component of the ER membrane protein complex (EMC).

Its subcellular location is the endoplasmic reticulum membrane. The protein resides in the golgi apparatus membrane. It is found in the early endosome membrane. Part of the endoplasmic reticulum membrane protein complex (EMC) that enables the energy-independent insertion into endoplasmic reticulum membranes of newly synthesized membrane proteins. Preferentially accommodates proteins with transmembrane domains that are weakly hydrophobic or contain destabilizing features such as charged and aromatic residues. Involved in the cotranslational insertion of multi-pass membrane proteins in which stop-transfer membrane-anchor sequences become ER membrane spanning helices. It is also required for the post-translational insertion of tail-anchored/TA proteins in endoplasmic reticulum membranes. By mediating the proper cotranslational insertion of N-terminal transmembrane domains in an N-exo topology, with translocated N-terminus in the lumen of the ER, controls the topology of multi-pass membrane proteins like the G protein-coupled receptors. By regulating the insertion of various proteins in membranes, it is indirectly involved in many cellular processes. May be involved in Mg(2+) transport. The polypeptide is ER membrane protein complex subunit 5 (Danio rerio (Zebrafish)).